A 202-amino-acid polypeptide reads, in one-letter code: Venom allergen 5 (202 aa).

3 disulfides stabilise this stretch: Cys4–Cys16, Cys8–Cys101, and Cys26–Cys94. The residue at position 107 (Tyr107) is a Phosphotyrosine. The N-linked (Glc) (glycation) lysine glycan is linked to Lys138. A disulfide bond links Cys168 and Cys185.

This sequence belongs to the CRISP family. Expressed by the venom gland.

Its subcellular location is the secreted. In terms of biological role, does not show toxicity when intravenously injected into mice tail. This chain is Venom allergen 5, found in Vespa velutina (Asian yellow-legged hornet).